Here is a 334-residue protein sequence, read N- to C-terminus: Glyceraldehyde-3-phosphate dehydrogenase B (334 aa).

Residues 12–13 (RI), Asp-34, and Ser-121 contribute to the NAD(+) site. D-glyceraldehyde 3-phosphate contacts are provided by residues 149-151 (SCT), Thr-180, 209-210 (TG), and Arg-232. The active-site Nucleophile is Cys-150. An NAD(+)-binding site is contributed by Asn-314.

It belongs to the glyceraldehyde-3-phosphate dehydrogenase family. Homotetramer.

The enzyme catalyses D-glyceraldehyde 3-phosphate + phosphate + NAD(+) = (2R)-3-phospho-glyceroyl phosphate + NADH + H(+). It participates in carbohydrate degradation; glycolysis; pyruvate from D-glyceraldehyde 3-phosphate: step 1/5. Functionally, glyceraldehyde-3-phosphate dehydrogenase; part of the gene cluster that mediates the biosynthesis of heptelidic acid (HA), a sesquiterpene lactone that acts as an inhibitor of glyceraldehyde-3-phosphatedehydrogenase (GAPDH) and a growth inhibitor of the salt-tolerant lactic acid bacteria in soy sauce brewing. The GAPDPH hepG/gdpB shows much higher resistance to HA than the GAPDH gpdA located outside of the cluster, but it does not seem to act in self-resistance. This chain is Glyceraldehyde-3-phosphate dehydrogenase B, found in Aspergillus oryzae (strain ATCC 42149 / RIB 40) (Yellow koji mold).